We begin with the raw amino-acid sequence, 461 residues long: MEKYVVVLAAGKGTRMKSKLYKVLHKVCGKTMVEHVVDAASGINPTKIVTVVGTGAGEVEKILANKSDFAFQEKQVGTGDAVMTAKEALGDKEGATLVVTGDTPLFTTDTFNELFKYHAEKGNAATVLTAEAPNPFGYGRIIRDNQGNVLRIVEQKDGNPDELKVKEINTGVFCFDNQKLFEALKHVDNDNAQGEYYLTDVLEILRNNGERVGAYKMPDFSESLGVNDRVALAQATKTMQRRINEAHMRDGVSFIDPDTAYIDADVKIGNDTVIEGNVVIKGNTEIGSDCYITNGSRIVDSKIGNGVTITSSTIEEAEMDDNTDIGPNSHLRPKAIIRKGAHIGNFVEIKKAEIGENTKVGHLTYVGDATLGKDINIGCGTIFSNYDGVKKFHTNVGDHSFIGAGSTLIAPINVADHAFIAADSTITKDVGKYDMAIARGRQTNKEDYWHKLPLSKDKDWE.

Residues Met1–Arg229 are pyrophosphorylase. UDP-N-acetyl-alpha-D-glucosamine is bound by residues Leu8 to Gly11, Lys22, Gln72, and Gly77 to Thr78. Asp102 is a Mg(2+) binding site. Residues Gly139, Glu154, Asn169, and Asn227 each coordinate UDP-N-acetyl-alpha-D-glucosamine. Asn227 is a Mg(2+) binding site. The linker stretch occupies residues Val230–Asp250. The interval Gly251–Glu461 is N-acetyltransferase. UDP-N-acetyl-alpha-D-glucosamine contacts are provided by Arg332 and Lys350. His362 acts as the Proton acceptor in catalysis. Positions 365 and 376 each coordinate UDP-N-acetyl-alpha-D-glucosamine. Acetyl-CoA is bound by residues Asn385–Tyr386, Ala422, and Arg439.

The protein in the N-terminal section; belongs to the N-acetylglucosamine-1-phosphate uridyltransferase family. It in the C-terminal section; belongs to the transferase hexapeptide repeat family. Homotrimer. Mg(2+) serves as cofactor.

It localises to the cytoplasm. The enzyme catalyses alpha-D-glucosamine 1-phosphate + acetyl-CoA = N-acetyl-alpha-D-glucosamine 1-phosphate + CoA + H(+). The catalysed reaction is N-acetyl-alpha-D-glucosamine 1-phosphate + UTP + H(+) = UDP-N-acetyl-alpha-D-glucosamine + diphosphate. The protein operates within nucleotide-sugar biosynthesis; UDP-N-acetyl-alpha-D-glucosamine biosynthesis; N-acetyl-alpha-D-glucosamine 1-phosphate from alpha-D-glucosamine 6-phosphate (route II): step 2/2. Its pathway is nucleotide-sugar biosynthesis; UDP-N-acetyl-alpha-D-glucosamine biosynthesis; UDP-N-acetyl-alpha-D-glucosamine from N-acetyl-alpha-D-glucosamine 1-phosphate: step 1/1. It participates in bacterial outer membrane biogenesis; LPS lipid A biosynthesis. Functionally, catalyzes the last two sequential reactions in the de novo biosynthetic pathway for UDP-N-acetylglucosamine (UDP-GlcNAc). The C-terminal domain catalyzes the transfer of acetyl group from acetyl coenzyme A to glucosamine-1-phosphate (GlcN-1-P) to produce N-acetylglucosamine-1-phosphate (GlcNAc-1-P), which is converted into UDP-GlcNAc by the transfer of uridine 5-monophosphate (from uridine 5-triphosphate), a reaction catalyzed by the N-terminal domain. This chain is Bifunctional protein GlmU, found in Lactobacillus helveticus (strain DPC 4571).